Reading from the N-terminus, the 285-residue chain is Kanamycin B dioxygenase (285 aa).

Belongs to the PhyH family. Fe cation serves as cofactor.

The enzyme catalyses kanamycin B + 2-oxoglutarate + O2 = 2'-dehydrokanamycin A + succinate + NH4(+) + CO2. The protein operates within antibiotic biosynthesis; kanamycin biosynthesis. In terms of biological role, mediates the conversion of kanamycin B into 2'-dehydrokanamycin A during the transformation of kanamycin B to kanamycin A. In Streptomyces kanamyceticus, this protein is Kanamycin B dioxygenase (kanJ).